The sequence spans 876 residues: Serrate RNA effector molecule homolog (876 aa).

Residues 1–90 form a disordered region; that stretch reads MGDSDDEYDR…RRDWDEHSSD (90 aa). Glycine 2 is subject to N-acetylglycine. Serine 4 carries the phosphoserine modification. Tyrosine 8 carries the post-translational modification Phosphotyrosine. The segment covering 8 to 73 has biased composition (basic and acidic residues); sequence YDRRRRDKFR…ERFSPPRHEL (66 aa). Phosphoserine occurs at positions 67, 74, and 136. Lysine 150 is covalently cross-linked (Glycyl lysine isopeptide (Lys-Gly) (interchain with G-Cter in SUMO2)). The interval 272 to 413 is disordered; the sequence is EEEEQAGKPG…PKDAPGLECK (142 aa). Residues 297 to 347 are compositionally biased toward basic and acidic residues; that stretch reads DGERKANEKDDKKEDGKQAENESSSDDKIKKSEGDGDKEEKKEDSEKEAKK. A compositionally biased stretch (acidic residues) spans 370–387; the sequence is SESESESGQAEEEKEEAD. Residues 388-413 show a composition bias toward basic and acidic residues; that stretch reads ETLKEKEKPKEEEREKPKDAPGLECK. At serine 493 the chain carries Phosphoserine. Threonine 544 carries the phosphothreonine modification. A Phosphoserine modification is found at serine 570. The segment at 575–597 is disordered; the sequence is ELLGSSGGAPPEEPPKEGNPAEI. Threonine 671 is subject to Phosphothreonine. Serine 679 is modified (phosphoserine). Omega-N-methylarginine is present on residues arginine 833, arginine 840, and arginine 850. Positions 835–854 are disordered; the sequence is NYDAFRGQGGYPGKPRNRMV.

This sequence belongs to the ARS2 family. Interacts with CASP8AP2, ERBB4, NCBP1/CBP80 and DROSHA. Interacts with LUZP4. Interacts with NCBP2/CBP20 and NCBP3. Interacts with MTREX.

The protein localises to the nucleus. It localises to the nucleoplasm. Its subcellular location is the cytoplasm. In terms of biological role, acts as a mediator between the cap-binding complex (CBC) and the primary microRNAs (miRNAs) processing machinery during cell proliferation. Contributes to the stability and delivery of capped primary miRNA transcripts to the primary miRNA processing complex containing DGCR8 and DROSHA, thereby playing a role in RNA-mediated gene silencing (RNAi) by miRNAs. Binds capped RNAs (m7GpppG-capped RNA); however interaction is probably mediated via its interaction with NCBP1/CBP80 component of the CBC complex. Involved in cell cycle progression at S phase. Does not directly confer arsenite resistance but rather modulates arsenic sensitivity. Independently of its activity on miRNAs, necessary and sufficient to promote neural stem cell self-renewal. Does so by directly binding SOX2 promoter and positively regulating its transcription. This Bos taurus (Bovine) protein is Serrate RNA effector molecule homolog (SRRT).